The primary structure comprises 272 residues: 2-dehydro-3-deoxyphosphooctonate aldolase (272 aa).

Belongs to the KdsA family.

It is found in the cytoplasm. The enzyme catalyses D-arabinose 5-phosphate + phosphoenolpyruvate + H2O = 3-deoxy-alpha-D-manno-2-octulosonate-8-phosphate + phosphate. The protein operates within carbohydrate biosynthesis; 3-deoxy-D-manno-octulosonate biosynthesis; 3-deoxy-D-manno-octulosonate from D-ribulose 5-phosphate: step 2/3. Its pathway is bacterial outer membrane biogenesis; lipopolysaccharide biosynthesis. The sequence is that of 2-dehydro-3-deoxyphosphooctonate aldolase from Geotalea uraniireducens (strain Rf4) (Geobacter uraniireducens).